We begin with the raw amino-acid sequence, 458 residues long: Argininosuccinate lyase (458 aa).

Belongs to the lyase 1 family. Argininosuccinate lyase subfamily.

The protein localises to the cytoplasm. It carries out the reaction 2-(N(omega)-L-arginino)succinate = fumarate + L-arginine. Its pathway is amino-acid biosynthesis; L-arginine biosynthesis; L-arginine from L-ornithine and carbamoyl phosphate: step 3/3. The sequence is that of Argininosuccinate lyase from Geobacter metallireducens (strain ATCC 53774 / DSM 7210 / GS-15).